A 24-amino-acid chain; its full sequence is Neurotoxin-2 (24 aa).

One can recognise an LCN-type CS-alpha/beta domain in the interval 1 to 24 (EDGYLLNRDTGCKVSCGTCRYCND).

This sequence belongs to the long (4 C-C) scorpion toxin superfamily. Sodium channel inhibitor family. Alpha subfamily. As to expression, expressed by the venom gland.

Its subcellular location is the secreted. Its function is as follows. Binds to sodium channels (Nav) and inhibits the inactivation of the activated channels, thereby blocking neuronal transmission. This toxin is active against mammals. The protein is Neurotoxin-2 of Hottentotta tamulus (Eastern Indian scorpion).